The sequence spans 39 residues: Potassium channel toxin alpha-KTx 2.17 (39 aa).

Cystine bridges form between Cys7-Cys29, Cys13-Cys34, and Cys17-Cys36. Position 39 is an isoleucine amide (Ile39).

This sequence belongs to the short scorpion toxin superfamily. Potassium channel inhibitor family. Alpha-KTx 02 subfamily. Expressed by the venom gland.

Its subcellular location is the secreted. Blocks human voltage-gated potassium channels Kv1.1/KCNA1 (IC(50)=4.8 nM) and Kv1.2/KCNA2 (IC(50)=2.9 nM). This is Potassium channel toxin alpha-KTx 2.17 from Centruroides tecomanus (Scorpion).